Reading from the N-terminus, the 103-residue chain is Large ribosomal subunit protein uL24 (103 aa).

Belongs to the universal ribosomal protein uL24 family. As to quaternary structure, part of the 50S ribosomal subunit.

In terms of biological role, one of two assembly initiator proteins, it binds directly to the 5'-end of the 23S rRNA, where it nucleates assembly of the 50S subunit. Functionally, one of the proteins that surrounds the polypeptide exit tunnel on the outside of the subunit. The sequence is that of Large ribosomal subunit protein uL24 from Pediococcus pentosaceus (strain ATCC 25745 / CCUG 21536 / LMG 10740 / 183-1w).